Consider the following 441-residue polypeptide: Damage-control phosphatase ARMT1 (441 aa).

A2 carries the post-translational modification N-acetylalanine. The residue at position 40 (K40) is an N6-acetyllysine. Residue S102 is modified to Phosphoserine. The Mn(2+) site is built by D253 and N254. 253 to 254 (DN) serves as a coordination point for substrate. S-adenosyl-L-methionine-binding residues include E258 and D291. Residue D291 participates in Mn(2+) binding. Residues 367–371 (DLNYR) and K404 contribute to the substrate site. The Subfamily III RTxK motif signature appears at 401–404 (RTLK).

It belongs to the damage-control phosphatase family. Sugar phosphate phosphatase III subfamily. It depends on Mn(2+) as a cofactor. Ni(2+) is required as a cofactor. Automethylated.

The enzyme catalyses beta-D-fructose 1-phosphate + H2O = D-fructose + phosphate. It catalyses the reaction beta-D-fructose 6-phosphate = dihydroxyacetone + D-glyceraldehyde 3-phosphate. The catalysed reaction is L-glutamyl-[protein] + S-adenosyl-L-methionine = [protein]-L-glutamate 5-O-methyl ester + S-adenosyl-L-homocysteine. Its function is as follows. Metal-dependent phosphatase that shows phosphatase activity against several substrates, including fructose-1-phosphate and fructose-6-phosphate. Its preference for fructose-1-phosphate, a strong glycating agent that causes DNA damage rather than a canonical yeast metabolite, suggests a damage-control function in hexose phosphate metabolism. Has also been shown to have O-methyltransferase activity that methylates glutamate residues of target proteins to form gamma-glutamyl methyl ester residues. Possibly methylates PCNA, suggesting it is involved in the DNA damage response. The protein is Damage-control phosphatase ARMT1 of Macaca fascicularis (Crab-eating macaque).